Here is a 482-residue protein sequence, read N- to C-terminus: CBL-interacting serine/threonine-protein kinase 23 (482 aa).

The span at 1–25 (MASRTTPSRSTPSRSTPSGSSSGGR) shows a compositional bias: low complexity. A disordered region spans residues 1-29 (MASRTTPSRSTPSRSTPSGSSSGGRTRVG). A Protein kinase domain is found at 31–286 (YELGRTLGEG…FAEVIENEWF (256 aa)). ATP is bound by residues 37-45 (LGEGTFAKV) and K60. Catalysis depends on D154, which acts as the Proton acceptor. Positions 172–201 (DFGLSALPQQVREDGLLHTTCGTPNYVAPE) are activation loop. Position 176 is a phosphoserine (S176). Residue T190 is modified to Phosphothreonine. The 25-residue stretch at 328-352 (KTPVTMNAFELISTSQGLNLGSLFE) folds into the NAF domain. The interval 359–388 (KRKTRFTSKSSANEIVTKIEAAAAPMGFDV) is PPI. The interval 459–482 (KEEGTDGGGTNGAMANRTIAKQST) is disordered.

It belongs to the protein kinase superfamily. CAMK Ser/Thr protein kinase family. SNF1 subfamily. In terms of assembly, part of a K(+)-channel calcium-sensing kinase/phosphatase complex composed by a calcium sensor CBL (CBL1, CBL2, CBL3 or CBL9), a kinase CIPK (CIPK6, CIPK16 or CIPK23), a phosphatase PP2C (AIP1) and a K(+)-channel (AKT1). Interacts with AKT1, CBL1, CBL2, CBL3, CBL5, CBL8, CBL9 and NRT1.1. The cofactor is Mn(2+). In terms of processing, autophosphorylated. As to expression, in seedlings, mostly in vascular bundles, and in roots, especially in cortex and endodermis cells. In adult plants, mostly expressed in flowers, and, to a lower extent, in roots, leaves, stems and siliques, particularly in vascular tissues. Also detected in guard cells and root hairs.

The protein resides in the cell membrane. The enzyme catalyses L-seryl-[protein] + ATP = O-phospho-L-seryl-[protein] + ADP + H(+). The catalysed reaction is L-threonyl-[protein] + ATP = O-phospho-L-threonyl-[protein] + ADP + H(+). Functionally, CIPK serine-threonine protein kinases interact with CBL proteins. Binding of a CBL protein to the regulatory NAF domain of CIPK protein leads to activation of the kinase in a calcium-dependent manner. Downstream of CBL1, CBL2, CBL3 and CBL9, regulates by phosphorylation the K(+) conductance and uptake of AKT1 in low K(+) condition, in response to calcium signaling and during the stomatal opening regulation by monitoring the turgor pressure in guard cells. In response to low nitrate concentration, phosphorylates NRT1.1, switching it from a low-affinity nitrate transporter to a high-affinity transporter. Confers tolerance to low potassium conditions. Involved in drought sensitivity and leaf transpiration. This chain is CBL-interacting serine/threonine-protein kinase 23 (CIPK23), found in Arabidopsis thaliana (Mouse-ear cress).